The following is a 61-amino-acid chain: MTDLKITLIRSAAHRLPEQRKIVKALGLGRVDSTVVLPDNAATRGALLKIAHLISVEEINK.

The protein belongs to the universal ribosomal protein uL30 family. As to quaternary structure, part of the 50S ribosomal subunit.

The chain is Large ribosomal subunit protein uL30 from Lactobacillus acidophilus (strain ATCC 700396 / NCK56 / N2 / NCFM).